A 354-amino-acid polypeptide reads, in one-letter code: Protein angel (354 aa).

The disordered stretch occupies residues 22–59 (VSSQAKGASGKRKQKAKEMESSHDRNRRWTSLGNQAEG).

Belongs to the CCR4/nocturin family. As to expression, ubiquitously expressed in embryos.

This chain is Protein angel (angel), found in Drosophila melanogaster (Fruit fly).